Here is a 918-residue protein sequence, read N- to C-terminus: Isoleucine--tRNA ligase 1 (918 aa).

A 'HIGH' region motif is present at residues 57–67 (PYANGDIHIGH). Residue E553 participates in L-isoleucyl-5'-AMP binding. The 'KMSKS' region motif lies at 594 to 598 (KMSKS). K597 contributes to the ATP binding site. Residues C885, C888, C905, and C908 each coordinate Zn(2+).

It belongs to the class-I aminoacyl-tRNA synthetase family. IleS type 1 subfamily. In terms of assembly, monomer. Zn(2+) serves as cofactor.

It is found in the cytoplasm. The catalysed reaction is tRNA(Ile) + L-isoleucine + ATP = L-isoleucyl-tRNA(Ile) + AMP + diphosphate. In terms of biological role, catalyzes the attachment of isoleucine to tRNA(Ile). As IleRS can inadvertently accommodate and process structurally similar amino acids such as valine, to avoid such errors it has two additional distinct tRNA(Ile)-dependent editing activities. One activity is designated as 'pretransfer' editing and involves the hydrolysis of activated Val-AMP. The other activity is designated 'posttransfer' editing and involves deacylation of mischarged Val-tRNA(Ile). The sequence is that of Isoleucine--tRNA ligase 1 from Oceanobacillus iheyensis (strain DSM 14371 / CIP 107618 / JCM 11309 / KCTC 3954 / HTE831).